Here is a 289-residue protein sequence, read N- to C-terminus: Cyclin-dependent kinase 2 homolog (289 aa).

Residues 4–285 (YHGLEKIGEG…AKQAIEHPYF (282 aa)) form the Protein kinase domain. ATP is bound by residues 10–18 (IGEGTYGVV) and lysine 32. Threonine 14 carries the post-translational modification Phosphothreonine. Tyrosine 15 bears the Phosphotyrosine mark. The Proton acceptor role is filled by aspartate 126. The residue at position 159 (threonine 159) is a Phosphothreonine.

It belongs to the protein kinase superfamily. CMGC Ser/Thr protein kinase family. CDC2/CDKX subfamily. In terms of assembly, may form a complex composed of at least the catalytic subunit CRK2 and a cyclin. The cofactor is Mg(2+).

The protein localises to the cytoplasm. The enzyme catalyses L-seryl-[protein] + ATP = O-phospho-L-seryl-[protein] + ADP + H(+). It catalyses the reaction L-threonyl-[protein] + ATP = O-phospho-L-threonyl-[protein] + ADP + H(+). It carries out the reaction [DNA-directed RNA polymerase] + ATP = phospho-[DNA-directed RNA polymerase] + ADP + H(+). With respect to regulation, phosphorylation at Thr-14 or Tyr-15 inactivates the enzyme, while phosphorylation at Thr-159 activates it. In terms of biological role, serine/threonine-protein kinase. Involved in the control of the cell cycle. Required for entry into S-phase and mitosis. Probable component of the kinase complex that phosphorylates the repetitive C-terminus of RNA polymerase II. The chain is Cyclin-dependent kinase 2 homolog from Plasmodium yoelii yoelii.